The following is an 869-amino-acid chain: Retrovirus-related Pol polyprotein from type-1 retrotransposable element R2 (869 aa).

The 277-residue stretch at 199–475 folds into the Reverse transcriptase domain; that stretch reads IFVFYGRVPS…DLWKYLGVVY (277 aa). A nucleic acid-binding endonuclease region spans residues 601–869; sequence LYASISHSCK…FNNVTTVVHW (269 aa).

The enzyme catalyses DNA(n) + a 2'-deoxyribonucleoside 5'-triphosphate = DNA(n+1) + diphosphate. The polypeptide is Retrovirus-related Pol polyprotein from type-1 retrotransposable element R2 (Bradysia coprophila (Dark-winged fungus gnat)).